Here is a 415-residue protein sequence, read N- to C-terminus: MATH domain and coiled-coil domain-containing protein At2g42465 (415 aa).

An MATH domain is found at 6-130 (RKALTLTVTN…NDRFNIEIYI (125 aa)). A coiled-coil region spans residues 244–341 (FKLEWLKAKL…LLKDTYSDLK (98 aa)).

This is MATH domain and coiled-coil domain-containing protein At2g42465 from Arabidopsis thaliana (Mouse-ear cress).